Consider the following 625-residue polypeptide: Replication protein E1 (625 aa).

The Nuclear localization signal motif lies at K83–K85. Phosphoserine; by host occurs at positions 89, 93, and 107. The Nuclear export signal signature appears at L106–L115. The disordered stretch occupies residues G147–D169. The tract at residues R162–D328 is DNA-binding region. The SF3 helicase domain occupies V427 to V577. G453–S460 serves as a coordination point for ATP. A Glycyl lysine isopeptide (Lys-Gly) (interchain with G-Cter in SUMO) cross-link involves residue K534.

The protein belongs to the papillomaviridae E1 protein family. As to quaternary structure, can form hexamers. Interacts with E2 protein; this interaction increases E1 DNA binding specificity. Interacts with host DNA polymerase subunit POLA2. Interacts with host single stranded DNA-binding protein RPA1. Interacts with host TOP1; this interaction stimulates the enzymatic activity of TOP1. Post-translationally, phosphorylated. Sumoylated.

Its subcellular location is the host nucleus. The enzyme catalyses Couples ATP hydrolysis with the unwinding of duplex DNA by translocating in the 3'-5' direction.. It carries out the reaction ATP + H2O = ADP + phosphate + H(+). Its function is as follows. ATP-dependent DNA 3'-5' helicase required for initiation of viral DNA replication. It forms a complex with the viral E2 protein. The E1-E2 complex binds to the replication origin which contains binding sites for both proteins. During the initial step, a dimer of E1 interacts with a dimer of protein E2 leading to a complex that binds the viral origin of replication with high specificity. Then, a second dimer of E1 displaces the E2 dimer in an ATP-dependent manner to form the E1 tetramer. Following this, two E1 monomers are added to each half of the site, which results in the formation of two E1 trimers on the viral ori. Subsequently, two hexamers will be created. The double hexamer acts as a bi-directional helicase machinery and unwinds the viral DNA and then recruits the host DNA polymerase to start replication. The protein is Replication protein E1 of Macaca mulatta (Rhesus macaque).